Consider the following 67-residue polypeptide: Large ribosomal subunit protein bL32c (67 aa).

This sequence belongs to the bacterial ribosomal protein bL32 family.

The protein resides in the plastid. It localises to the chloroplast. This Chara vulgaris (Common stonewort) protein is Large ribosomal subunit protein bL32c.